The primary structure comprises 258 residues: MRVVPTLAAASLALGAVAGEHVERQLILGGGEVPIGTKTYATGIRSTADGNAFCAGALVSPTHVLTTAACTGFEPPKFVAVGTHYINGTKDGEQIKVVSAQNHTLNNASSASYDFALLTLEKPSKFSPIKLPNPDDSDIVAGMWTKVMGWGDTSYPNGTRSNELQSVGVEVWNNEDCARLFVVDNSSVCAGGAPGRDACVGDTGASLVKEKGQGDADDILIGLSSWGSGCGDPGIPSVYSRVSTAIEWITSVTKVQQV.

Residues 1–19 (MRVVPTLAAASLALGAVAG) form the signal peptide. One can recognise a Peptidase S1 domain in the interval 27-254 (ILGGGEVPIG…AIEWITSVTK (228 aa)). A disulfide bridge links cysteine 54 with cysteine 70. N-linked (GlcNAc...) asparagine glycans are attached at residues asparagine 87, asparagine 102, asparagine 107, asparagine 157, and asparagine 185. 2 disulfide bridges follow: cysteine 177-cysteine 189 and cysteine 199-cysteine 230.

Belongs to the peptidase S1 family. As to quaternary structure, forms an apoplastic complex with host endoglucanases in tomato leaves during P.infestans infection.

The protein resides in the secreted. Functionally, secreted effector that suppresses host plant glucan elicitor-mediated defense responses. Targets host endoglucanases and inhibits the endoglucanase-mediated release of elicitor-active glucan oligosaccharides from P.infestans cell walls. This is Glucanase inhibitor protein 1 from Phytophthora infestans (Potato late blight agent).